Here is a 778-residue protein sequence, read N- to C-terminus: Glutathione biosynthesis bifunctional protein GshAB (778 aa).

The tract at residues 1–354 is glutamate--cysteine ligase; it reads MVNLDKGLLK…EEFFKNHDMV (354 aa). In terms of domain architecture, ATP-grasp spans 521 to 777; the sequence is KDILRENNIR…AGEKILDLLF (257 aa). 548-606 lines the ATP pocket; the sequence is RLFKDEKIVIKPKSTNFGLGISIFPGEYSREDYDKAVEIAFREDSSILIEEFMTGKEYR. Mg(2+)-binding residues include aspartate 728, glutamate 747, and asparagine 749. The Mn(2+) site is built by aspartate 728, glutamate 747, and asparagine 749.

It in the N-terminal section; belongs to the glutamate--cysteine ligase type 1 family. Type 2 subfamily. Monomer. Mg(2+) is required as a cofactor. Requires Mn(2+) as cofactor.

The enzyme catalyses L-cysteine + L-glutamate + ATP = gamma-L-glutamyl-L-cysteine + ADP + phosphate + H(+). The catalysed reaction is gamma-L-glutamyl-L-cysteine + glycine + ATP = glutathione + ADP + phosphate + H(+). It functions in the pathway sulfur metabolism; glutathione biosynthesis; glutathione from L-cysteine and L-glutamate: step 1/2. The protein operates within sulfur metabolism; glutathione biosynthesis; glutathione from L-cysteine and L-glutamate: step 2/2. In terms of biological role, synthesizes glutathione from L-glutamate and L-cysteine via gamma-L-glutamyl-L-cysteine. The sequence is that of Glutathione biosynthesis bifunctional protein GshAB from Clostridium perfringens (strain 13 / Type A).